Consider the following 212-residue polypeptide: Ribosomal RNA small subunit methyltransferase G (212 aa).

S-adenosyl-L-methionine-binding positions include Gly75, Leu80, 126–127, and Arg141; that span reads AQ.

The protein belongs to the methyltransferase superfamily. RNA methyltransferase RsmG family.

Its subcellular location is the cytoplasm. Specifically methylates the N7 position of guanine in position 518 of 16S rRNA. The chain is Ribosomal RNA small subunit methyltransferase G from Beutenbergia cavernae (strain ATCC BAA-8 / DSM 12333 / CCUG 43141 / JCM 11478 / NBRC 16432 / NCIMB 13614 / HKI 0122).